Here is a 424-residue protein sequence, read N- to C-terminus: Serine--tRNA ligase (424 aa).

230–232 contributes to the L-serine binding site; it reads TAE. Residue 261-263 coordinates ATP; it reads RSE. Residue Glu284 coordinates L-serine. ATP is bound at residue 348 to 351; sequence EISS. Ser384 contacts L-serine.

Belongs to the class-II aminoacyl-tRNA synthetase family. Type-1 seryl-tRNA synthetase subfamily. Homodimer. The tRNA molecule binds across the dimer.

The protein resides in the cytoplasm. It carries out the reaction tRNA(Ser) + L-serine + ATP = L-seryl-tRNA(Ser) + AMP + diphosphate + H(+). It catalyses the reaction tRNA(Sec) + L-serine + ATP = L-seryl-tRNA(Sec) + AMP + diphosphate + H(+). It functions in the pathway aminoacyl-tRNA biosynthesis; selenocysteinyl-tRNA(Sec) biosynthesis; L-seryl-tRNA(Sec) from L-serine and tRNA(Sec): step 1/1. Its function is as follows. Catalyzes the attachment of serine to tRNA(Ser). Is also able to aminoacylate tRNA(Sec) with serine, to form the misacylated tRNA L-seryl-tRNA(Sec), which will be further converted into selenocysteinyl-tRNA(Sec). This chain is Serine--tRNA ligase, found in Streptococcus pneumoniae (strain 70585).